A 208-amino-acid polypeptide reads, in one-letter code: Uracil phosphoribosyltransferase (208 aa).

5-phospho-alpha-D-ribose 1-diphosphate contacts are provided by residues R78, R103, and 130-138; that span reads DPMLATGGT. Residues I193 and 198 to 200 each bind uracil; that span reads GDA. D199 provides a ligand contact to 5-phospho-alpha-D-ribose 1-diphosphate.

It belongs to the UPRTase family. Mg(2+) serves as cofactor.

It catalyses the reaction UMP + diphosphate = 5-phospho-alpha-D-ribose 1-diphosphate + uracil. It functions in the pathway pyrimidine metabolism; UMP biosynthesis via salvage pathway; UMP from uracil: step 1/1. Its activity is regulated as follows. Allosterically activated by GTP. Catalyzes the conversion of uracil and 5-phospho-alpha-D-ribose 1-diphosphate (PRPP) to UMP and diphosphate. The chain is Uracil phosphoribosyltransferase from Solidesulfovibrio magneticus (strain ATCC 700980 / DSM 13731 / RS-1) (Desulfovibrio magneticus).